The chain runs to 576 residues: Eukaryotic translation initiation factor 3 subunit D (576 aa).

The interval 103-176 (DSTKTRFGRG…KDYDKPQRNR (74 aa)) is disordered. The segment covering 110–122 (GRGGLARGRGQRG) has biased composition (gly residues). The span at 165–176 (GWKDYDKPQRNR) shows a compositional bias: basic and acidic residues. The tract at residues 304–318 (TLDMVTVNENAADAP) is RNA gate.

This sequence belongs to the eIF-3 subunit D family. As to quaternary structure, component of the eukaryotic translation initiation factor 3 (eIF-3) complex.

The protein resides in the cytoplasm. In terms of biological role, mRNA cap-binding component of the eukaryotic translation initiation factor 3 (eIF-3) complex, which is involved in protein synthesis of a specialized repertoire of mRNAs and, together with other initiation factors, stimulates binding of mRNA and methionyl-tRNAi to the 40S ribosome. The eIF-3 complex specifically targets and initiates translation of a subset of mRNAs involved in cell proliferation. In the eIF-3 complex, eif3d specifically recognizes and binds the 7-methylguanosine cap of a subset of mRNAs. This Botryotinia fuckeliana (strain B05.10) (Noble rot fungus) protein is Eukaryotic translation initiation factor 3 subunit D.